We begin with the raw amino-acid sequence, 395 residues long: ATP phosphoribosyltransferase regulatory subunit (395 aa).

It belongs to the class-II aminoacyl-tRNA synthetase family. HisZ subfamily. In terms of assembly, heteromultimer composed of HisG and HisZ subunits.

The protein resides in the cytoplasm. The protein operates within amino-acid biosynthesis; L-histidine biosynthesis; L-histidine from 5-phospho-alpha-D-ribose 1-diphosphate: step 1/9. In terms of biological role, required for the first step of histidine biosynthesis. May allow the feedback regulation of ATP phosphoribosyltransferase activity by histidine. The chain is ATP phosphoribosyltransferase regulatory subunit from Azotobacter vinelandii (strain DJ / ATCC BAA-1303).